We begin with the raw amino-acid sequence, 328 residues long: Neuronal membrane glycoprotein M6-b (328 aa).

The tract at residues 1 to 22 is disordered; that stretch reads MKPAMETAAEENTEQSQERKVN. A helical transmembrane segment spans residues 71 to 91; it reads GGVPYASLVATILCFSGVALF. N113 carries an N-linked (GlcNAc...) asparagine glycan. The next 2 helical transmembrane spans lie at 130 to 150 and 176 to 196; these read VIYG…AEGF and FVFL…FSAV. A glycan (N-linked (GlcNAc...) asparagine) is linked at N217. The chain crosses the membrane as a helical span at residues 265-285; the sequence is FIVACAGAGATVIALIHFLMI. Residues S318, S320, and S326 each carry the phosphoserine modification.

The protein belongs to the myelin proteolipid protein family. Interacts with SERT. Widely expressed. In the brain, expressed in neurons and oligodendrocytes.

Its subcellular location is the membrane. The protein resides in the cell membrane. Its function is as follows. May be involved in neural development. Involved in regulation of osteoblast function and bone formation. Involved in matrix vesicle release by osteoblasts; this function seems to involve maintenance of the actin cytoskeleton. May be involved in cellular trafficking of SERT and thereby in regulation of serotonin uptake. In Mus musculus (Mouse), this protein is Neuronal membrane glycoprotein M6-b (Gpm6b).